A 356-amino-acid polypeptide reads, in one-letter code: Butyrate kinase 2 (356 aa).

This sequence belongs to the acetokinase family. As to quaternary structure, homodimer.

The protein localises to the cytoplasm. It carries out the reaction butanoate + ATP = butanoyl phosphate + ADP. It participates in lipid metabolism; butanoate metabolism. Its function is as follows. Catalyzes the conversion of butyryl-CoA through butyryl phosphate to butyrate. The chain is Butyrate kinase 2 (buk2) from Clostridium acetobutylicum (strain ATCC 824 / DSM 792 / JCM 1419 / IAM 19013 / LMG 5710 / NBRC 13948 / NRRL B-527 / VKM B-1787 / 2291 / W).